The chain runs to 265 residues: uncharacterized protein (265 aa).

The active site involves Glu47.

It belongs to the PhzF family.

This is an uncharacterized protein from Halalkalibacterium halodurans (strain ATCC BAA-125 / DSM 18197 / FERM 7344 / JCM 9153 / C-125) (Bacillus halodurans).